We begin with the raw amino-acid sequence, 381 residues long: MSSSISPLLTTAISVAILLFSTISTAATIPNIHRPFNKIYAFGDSFTDTGNSRSGEGPAGFGHLSSPPYGMTFFRRPTNRYSDGRLTIDFVAESMNLPFLPPYLSLKTTNANGTATDTHGVNFAVSGSTVIKHAFFVKNNLSLDMTPQSIETELAWFEKYLETLGTNQKVSLFKDSLFWIGEIGVNDYAYTLGSTVSSDTIRELSISTFTRFLETLLNKGVKYMLVQGHPATGCLTLAMSLAAEDDRDSLGCVQSANNQSYTHNLALQSKLKQLRIKYPSATIVYADYWNAYRAVIKHPSKYGITEKFKACCGIGEPYNFQVFQTCGTDAATVCKDPNQYINWDGVHLTEAMYKVMADMFLDGTFTRPRFSDLLIKKLNYL.

The first 26 residues, 1–26 (MSSSISPLLTTAISVAILLFSTISTA), serve as a signal peptide directing secretion. Ser45 acts as the Nucleophile in catalysis. N-linked (GlcNAc...) asparagine glycans are attached at residues Asn112, Asn140, and Asn258. Catalysis depends on residues Asp344 and His347.

The protein belongs to the 'GDSL' lipolytic enzyme family.

It localises to the secreted. This is GDSL esterase/lipase At3g48460 from Arabidopsis thaliana (Mouse-ear cress).